A 422-amino-acid chain; its full sequence is Vitamin D3 receptor B (422 aa).

The nuclear receptor DNA-binding region spans 20–95 (PRICGVCGDK…IGMMKEFILT (76 aa)). 8 residues coordinate Zn(2+): C23, C26, C40, C43, C59, C65, C75, and C78. NR C4-type zinc fingers lie at residues 23 to 43 (CGVCGDKATGFHFNAMTCEGC) and 59 to 78 (CPFNGSCTITKDNRRHCQAC). The hinge stretch occupies residues 96-125 (DEEVQRKKELIQRRKDEEAHREAQKPRLSD). Positions 106–128 (IQRRKDEEAHREAQKPRLSDEQR) are disordered. Positions 126–418 (EQRNIIDTLV…LTPLVLEVFG (293 aa)) constitute an NR LBD domain. Residue Y142 coordinates calcitriol. Residues 145–190 (SYSDFSRFRPPVREGPVTRSASRAASLHSLSDASSDSFSHSPESGD) are disordered. The span at 163 to 185 (RSASRAASLHSLSDASSDSFSHS) shows a compositional bias: low complexity. S234 provides a ligand contact to calcitriol. Positions 243-261 (KMIPGFRELTAEDQIALLK) are interaction with coactivator LXXLL motif. Calcitriol is bound by residues R271, S275, H302, and H392. The short motif at 411-419 (PLVLEVFGG) is the 9aaTAD element.

Belongs to the nuclear hormone receptor family. In terms of assembly, homodimer in the absence of bound vitamin D3. Heterodimer with RXRA after vitamin D3 binding. Interacts with ncoa1 and possibly other coactivators, leading to a strong increase of transcription of target genes. Detected in embryo 24 to 48 hours after fertilization, and in intestinal bulb.

The protein localises to the nucleus. It is found in the cytoplasm. Nuclear receptor for calcitriol, the active form of vitamin D3 which mediates the action of this vitamin on cells. Enters the nucleus upon vitamin D3 binding where it forms heterodimers with the retinoid X receptor/RXR. The VDR-RXR heterodimers bind to specific response elements on DNA and activate the transcription of vitamin D3-responsive target genes. Recruited to promoters via its interaction with BAZ1B/WSTF which mediates the interaction with acetylated histones, an essential step for VDR-promoter association. Plays a central role in calcium homeostasis. The polypeptide is Vitamin D3 receptor B (vdrb) (Danio rerio (Zebrafish)).